Reading from the N-terminus, the 114-residue chain is TYRO protein tyrosine kinase-binding protein (114 aa).

Residues 1-27 (MGAPEPSWCFLFLPVLLTVGGLSPVQA) form the signal peptide. Over 28–42 (QSDNYPGCECSSVSP) the chain is Extracellular. The helical transmembrane segment at 43–63 (GVLAGIVLGDLVLTLLIALAV) threads the bilayer. Asp52 is a binding site for Ca(2+). Residues 64–114 (YSLGRLVSRGRGTADGTRKQHMAETESPYQELQGQRPEVYSDLNTQRQYYR) are Cytoplasmic-facing. The segment at 72-114 (RGRGTADGTRKQHMAETESPYQELQGQRPEVYSDLNTQRQYYR) is disordered. Residues 81-109 (RKQHMAETESPYQELQGQRPEVYSDLNTQ) form the ITAM domain. A phosphotyrosine mark is found at Tyr92 and Tyr103. Residues 105-114 (DLNTQRQYYR) show a composition bias toward polar residues.

It belongs to the TYROBP family. In terms of assembly, homodimer; disulfide-linked. Homotrimer; disulfide-linked. Homotetramer; disulfide-linked. Homotrimers and homotetramers form when low levels of partner receptors are available and is competitive with assembly with interacting receptors. They may represent alternative oligomerization states or may be intermediates in the receptor assembly process. Binding of a metal cation aids in homooligomerization through coordination of the metal ion by the subunits of the oligomer. Interacts with TREM1. Interacts with TREM2. Interacts with CLECSF5. Interacts with CD300LB and CD300C2. Interacts with CD300E. Interacts (via ITAM domain) with SYK (via SH2 domains); activates SYK mediating neutrophils and macrophages integrin-mediated activation. Interacts with KLRC2. Interacts with CD300H. Interacts with KLRD1. Interacts with SIGLEC1. In terms of processing, following ligand binding by associated receptors, tyrosine phosphorylated in the ITAM domain which leads to activation of additional tyrosine kinases and subsequent cell activation.

It localises to the cell membrane. Adapter protein which non-covalently associates with activating receptors found on the surface of a variety of immune cells to mediate signaling and cell activation following ligand binding by the receptors. TYROBP is tyrosine-phosphorylated in the ITAM domain following ligand binding by the associated receptors which leads to activation of additional tyrosine kinases and subsequent cell activation. Also has an inhibitory role in some cells. Non-covalently associates with activating receptors of the CD300 family to mediate cell activation. Also mediates cell activation through association with activating receptors of the CD200R family. Required for neutrophil activation mediated by integrin. Required for the activation of myeloid cells mediated by the CLEC5A/MDL1 receptor. Associates with natural killer (NK) cell receptors such as the KLRD1/KLRC2 heterodimer to mediate NK cell activation. Associates with TREM1 to mediate activation of neutrophils and monocytes. Associates with TREM2 on monocyte-derived dendritic cells to mediate up-regulation of chemokine receptor CCR7 and dendritic cell maturation and survival. PAssociation with TREM2 mediates cytokine-induced formation of multinucleated giant cells which are formed by the fusion of macrophages. Stabilizes the TREM2 C-terminal fragment (TREM2-CTF) produced by TREM2 ectodomain shedding which suppresses the release of pro-inflammatory cytokines. In microglia, required with TREM2 for phagocytosis of apoptotic neurons. Required with ITGAM/CD11B in microglia to control production of microglial superoxide ions which promote the neuronal apoptosis that occurs during brain development. Promotes pro-inflammatory responses in microglia following nerve injury which accelerates degeneration of injured neurons. ositively regulates the expression of the IRAK3/IRAK-M kinase and IL10 production by liver dendritic cells and inhibits their T cell allosimulatory ability. Negatively regulates B cell proliferation. Required for CSF1-mediated osteoclast cytoskeletal organization. Positively regulates multinucleation during osteoclast development. The chain is TYRO protein tyrosine kinase-binding protein from Rattus norvegicus (Rat).